The sequence spans 908 residues: Chloride channel protein 2 (908 aa).

Residues 1–95 are Cytoplasmic-facing; it reads MAAATAAAAA…RCHKFLVSRV (95 aa). An essential for channel gating by both voltage and cell volume region spans residues 24–42; it reads QYEQTLMYGRYTQELGAFA. Thr28 carries the post-translational modification Phosphothreonine. Residues 44-57 form a modulates channel gating by both voltage and cell volume region; it reads EEAARIRLGGPEPW. 2 consecutive transmembrane segments (helical) span residues 96–129 and 138–163; these read GEDWIFLVLLGLLMALVSWAMDYAIAVCLQAQQW and ILLQYLAWVTYPVVLITFSAGFTQIL. The short motif at 169–173 is the Selectivity filter part_1 element; it reads GSGIP. Ser170 contributes to the chloride binding site. The segment at residues 172–179 is an intramembrane region (helical); the sequence is IPEMKTIL. 2 helical membrane-spanning segments follow: residues 188-206 and 213-231; these read LTLKTFVAKVIGLTCALGS and EGPFVHIASMCAALLSKFL. A Selectivity filter part_2 motif is present at residues 211–215; it reads GKEGP. Intramembrane regions (helical) lie at residues 247–259 and 263–271; these read MLAAACAVGVGCC and PIGGVLFSI. 5 consecutive transmembrane segments (helical) span residues 283–303, 329–357, 366–385, 437–457, and 465–488; these read YWRGFFAATFSAFIFRVLAVW, LPAFAVIGIASGFGGALFVYLNRKIVQVM, FLMRKRLLFPALVTLLISTL, ANVFLTLVIFILMKFWMSALA, and GAFMPVFVIGAAFGRLVGESMAAW. The Selectivity filter part_3 signature appears at 465 to 469; it reads GAFMP. Chloride is bound at residue Phe467. The helical intramembrane region spans 505-519; that stretch reads GGYAVVGAAALAGAV. Positions 520 to 521 form an intramembrane region, note=Loop between two helices; the sequence is TH. An intramembrane region (helical) is located at residues 522–533; sequence TVSTAVIVFELT. Residues 534 to 538 constitute an intramembrane region (note=Loop between two helices); that stretch reads GQIAH. The chain crosses the membrane as a helical span at residues 539-556; sequence ILPVMIAVILANAVAQSL. Topologically, residues 557 to 908 are cytoplasmic; that stretch reads QPSLYDSIIR…TPSDSDDKCQ (352 aa). Tyr561 provides a ligand contact to chloride. The region spanning 592–650 is the CBS 1 domain; it reads MVRDVPHVALSCTFRDLRLALHRTKGRMLALVESPESMILLGSIERSQVVALLGAQLSP. Over residues 653 to 662 the composition is skewed to basic residues; it reads RRQHMQKLRK. A disordered region spans residues 653 to 722; that stretch reads RRQHMQKLRK…NSTSLQEGTT (70 aa). A compositionally biased stretch (low complexity) spans 666-680; sequence SPPSDQESPPSSETS. The span at 681 to 690 shows a compositional bias: polar residues; that stretch reads IRFQVNTEDS. The segment covering 698–707 has biased composition (basic residues); sequence QTHKPLKPAL. A compositionally biased stretch (polar residues) spans 711-722; sequence PSNSTSLQEGTT. Ser768 carries the phosphoserine modification. In terms of domain architecture, CBS 2 spans 800–860; sequence IDPAPFQLVE…GSVTAQGVKV (61 aa). Positions 822–823 match the Basolateral membrane sorting motif; that stretch reads LL. The segment at 866-908 is disordered; the sequence is SFRDSATSSSDTETTEVHALWGPRSRHGLPREGTPSDSDDKCQ.

It belongs to the chloride channel (TC 2.A.49) family. ClC-2/CLCN2 subfamily. As to quaternary structure, homodimer. Interacts with auxiliary subunit HEPACAM. Phosphorylated. Activated by dephosphorylation. Expressed in the adrenal gland and brain. Expressed in intestinal epithelium (at protein level). Expressed in salivary gland (at protein level).

Its subcellular location is the cell membrane. It is found in the myelin membrane. The protein localises to the basolateral cell membrane. The protein resides in the cell projection. It localises to the dendritic spine membrane. Its subcellular location is the axon. The catalysed reaction is chloride(in) = chloride(out). The enzyme catalyses thiocyanate(in) = thiocyanate(out). It catalyses the reaction bromide(in) = bromide(out). It carries out the reaction nitrate(in) = nitrate(out). The catalysed reaction is iodide(out) = iodide(in). Its activity is regulated as follows. Common gate kinetics are down-regulated by intracellular ATP. Inhibited by AK-42, a derivative of meclofenamate. Inhibited by Cd(2+). Inhibited by Zn(2+) and PKC activation. Inhibited at acidic pH. CCLN2:HEPACAM channel conductance is up-regulated upon hypo-osmolarity. Voltage-gated and osmosensitive chloride channel. Forms a homodimeric channel where each subunit has its own ion conduction pathway. Conducts double-barreled currents controlled by two types of gates, two fast glutamate gates that control each subunit independently and a slow common gate that opens and shuts off both subunits simultaneously. Displays inward rectification currents activated upon membrane hyperpolarization and extracellular hypotonicity. Contributes to chloride conductance involved in neuron excitability. In hippocampal neurons, generates a significant part of resting membrane conductance and provides an additional chloride efflux pathway to prevent chloride accumulation in dendrites upon GABA receptor activation. In glia, associates with the auxiliary subunit HEPACAM/GlialCAM at astrocytic processes and myelinated fiber tracts where it may regulate transcellular chloride flux buffering extracellular chloride and potassium concentrations. Regulates aldosterone production in adrenal glands. The opening of CLCN2 channels at hyperpolarized membrane potentials in the glomerulosa causes cell membrane depolarization, activation of voltage-gated calcium channels and increased expression of aldosterone synthase, the rate-limiting enzyme for aldosterone biosynthesis. Contributes to chloride conductance in retinal pigment epithelium involved in phagocytosis of shed photoreceptor outer segments and photoreceptor renewal. Conducts chloride currents at the basolateral membrane of epithelial cells with a role in chloride reabsorption rather than secretion. Permeable to small monovalent anions with chloride &gt; thiocyanate &gt; bromide &gt; nitrate &gt; iodide ion selectivity. In Mus musculus (Mouse), this protein is Chloride channel protein 2 (Clcn2).